We begin with the raw amino-acid sequence, 718 residues long: K(+)-insensitive pyrophosphate-energized proton pump (718 aa).

6 helical membrane passes run 6–26, 61–81, 83–103, 112–132, 133–153, and 168–188; these read AVLV…IWAI, IAIV…LNAA, GFLI…HVSV, AASL…AITG, LLVA…LTVW, and VSLG…GGIF. Lys190 lines the substrate pocket. Mg(2+)-binding residues include Asp193, Asp197, Asn220, and Asp223. 6 helical membrane-spanning segments follow: residues 235–255, 265–285, 300–320, 335–355, 385–405, and 413–433; these read LFET…IFFH, LYPL…TFFV, GLIA…TLTV, GTNL…IVVI, GLAV…GGII, and LFGT…IVAL. Residue Asp441 participates in Mg(2+) binding. A run of 4 helical transmembrane segments spans residues 472-492, 524-544, 593-613, and 620-640; these read AVTK…LFAA, YVVA…GMAM, IIPS…VLLI, and AFAA…FVAI. 3 residues coordinate Ca(2+): Asp650, Asp682, and Asp686. Lys689 provides a ligand contact to substrate. The chain crosses the membrane as a helical span at residues 695-715; the sequence is AVNPAIKITNIVALLLLAVLA.

The protein belongs to the H(+)-translocating pyrophosphatase (TC 3.A.10) family. K(+)-insensitive subfamily. Homodimer. The cofactor is Mg(2+).

It is found in the cell inner membrane. It carries out the reaction diphosphate + H2O + H(+)(in) = 2 phosphate + 2 H(+)(out). Functionally, proton pump that utilizes the energy of pyrophosphate hydrolysis as the driving force for proton movement across the membrane. Generates a proton motive force. This is K(+)-insensitive pyrophosphate-energized proton pump from Brucella melitensis biotype 1 (strain ATCC 23456 / CCUG 17765 / NCTC 10094 / 16M).